We begin with the raw amino-acid sequence, 358 residues long: Chorismate synthase (358 aa).

Arginine 48 provides a ligand contact to NADP(+). FMN contacts are provided by residues 125–127 (RAS), serine 277, 292–296 (KPIPS), and arginine 318.

It belongs to the chorismate synthase family. As to quaternary structure, homotetramer. It depends on FMNH2 as a cofactor.

The catalysed reaction is 5-O-(1-carboxyvinyl)-3-phosphoshikimate = chorismate + phosphate. It functions in the pathway metabolic intermediate biosynthesis; chorismate biosynthesis; chorismate from D-erythrose 4-phosphate and phosphoenolpyruvate: step 7/7. In terms of biological role, catalyzes the anti-1,4-elimination of the C-3 phosphate and the C-6 proR hydrogen from 5-enolpyruvylshikimate-3-phosphate (EPSP) to yield chorismate, which is the branch point compound that serves as the starting substrate for the three terminal pathways of aromatic amino acid biosynthesis. This reaction introduces a second double bond into the aromatic ring system. The chain is Chorismate synthase from Desulfatibacillum aliphaticivorans.